Consider the following 355-residue polypeptide: MASRQGPLCGLAPCCLWLLGVILLMNASARPANHSSARERAGNREENEILPPDHLNGVKLEMDGHLNKDFHQEVFLGKDMDDFEEDAEPRKSRRKLMVIFSKVDLNTDRRISAKEMQKWIMQKTAEHFQEAVAESRAHFRAVDPDGDGHVSWDEYKVKFLATKGHNEREVAEKIKNKWDLNIDEETQEVLENLKDRWYQADNPPPDLLLTESEFLSFLHPEHSRGMLQFMVKEIIRDLDQDGDKKLSLSEFISLPVGTVENQQGQDVDDGWVRDRKREFEELIDANHDGIVTMAELEDYMDPMNEFSALNEAKQMIAIADENQNHYLEPEEVLKYSEFFTGSKLVDYARSVHEEF.

Positions methionine 1–alanine 29 are cleaved as a signal peptide. N-linked (GlcNAc...) asparagine glycosylation occurs at asparagine 26. 2 consecutive EF-hand domains span residues lysine 91–glutamate 126 and glutamate 130–histidine 165. The residue at position 92 (serine 92) is a Phosphoserine. Ca(2+) contacts are provided by aspartate 104, asparagine 106, aspartate 108, arginine 110, glutamate 115, aspartate 143, aspartate 145, aspartate 147, histidine 149, and glutamate 154. Threonine 186 and threonine 210 each carry phosphothreonine. EF-hand domains lie at methionine 226–asparagine 261, tryptophan 271–phenylalanine 306, and serine 307–serine 342. Ca(2+)-binding residues include aspartate 239, aspartate 241, aspartate 243, lysine 245, and glutamate 250. Phosphothreonine is present on threonine 258. Residues aspartate 284, asparagine 286, and aspartate 288 each contribute to the Ca(2+) site. Threonine 292 bears the Phosphothreonine mark. Glutamate 295, aspartate 320, asparagine 322, asparagine 324, tyrosine 326, and glutamate 331 together coordinate Ca(2+). A necessary for intracellular retention in Golgi apparatus lumen region spans residues proline 302–phenylalanine 355.

Belongs to the CREC family.

The protein resides in the golgi apparatus lumen. In terms of biological role, may regulate calcium-dependent activities in the endoplasmic reticulum lumen or post-ER compartment. In Capra hircus (Goat), this protein is 45 kDa calcium-binding protein (SDF4).